The chain runs to 202 residues: Large ribosomal subunit protein bL25 (202 aa).

This sequence belongs to the bacterial ribosomal protein bL25 family. CTC subfamily. Part of the 50S ribosomal subunit; part of the 5S rRNA/L5/L18/L25 subcomplex. Contacts the 5S rRNA. Binds to the 5S rRNA independently of L5 and L18.

Functionally, this is one of the proteins that binds to the 5S RNA in the ribosome where it forms part of the central protuberance. This Burkholderia ambifaria (strain MC40-6) protein is Large ribosomal subunit protein bL25.